The primary structure comprises 474 residues: Gamma-aminobutyric acid receptor subunit beta-1 (474 aa).

A signal peptide spans 1–25; the sequence is MWTVQNRESLGLLSFPVMVAMVCCA. Topologically, residues 26 to 245 are extracellular; sequence HSSNEPSNMS…SFRLKRNIGY (220 aa). N33 and N105 each carry an N-linked (GlcNAc...) asparagine glycan. Y122 provides a ligand contact to histamine. C161 and C175 are oxidised to a cystine. N-linked (GlcNAc...) asparagine glycosylation is present at N174. Histamine is bound by residues 181–182 and T227; that span reads SY. 2 residues coordinate 4-aminobutanoate: Y182 and T227. The next 3 membrane-spanning stretches (helical) occupy residues 246-267, 271-293, and 305-327; these read FILQ…SFWI, ASAA…STHL, and AIDI…YAFV. Over 328-451 the chain is Cytoplasmic; it reads NYIFFGKGPQ…DLTDVNSIDK (124 aa). A helical transmembrane segment spans residues 452-473; the sequence is WSRMFFPITFSLFNVVYWLYYV.

It belongs to the ligand-gated ion channel (TC 1.A.9) family. Gamma-aminobutyric acid receptor (TC 1.A.9.5) subfamily. GABRB1 sub-subfamily. As to quaternary structure, heteropentamer, formed by a combination of alpha (GABRA1-6), beta (GABRB1-3), gamma (GABRG1-3), delta (GABRD), epsilon (GABRE), rho (GABRR1-3), pi (GABRP) and theta (GABRQ) chains, each subunit exhibiting distinct physiological and pharmacological properties. Binds UBQLN1.

It localises to the postsynaptic cell membrane. The protein localises to the cell membrane. The catalysed reaction is chloride(in) = chloride(out). With respect to regulation, potentiated by histamine. Its function is as follows. Beta subunit of the heteropentameric ligand-gated chloride channel gated by gamma-aminobutyric acid (GABA), a major inhibitory neurotransmitter in the brain. GABA-gated chloride channels, also named GABA(A) receptors (GABAAR), consist of five subunits arranged around a central pore and contain GABA active binding site(s) located at the alpha and beta subunit interface(s). When activated by GABA, GABAARs selectively allow the flow of chloride anions across the cell membrane down their electrochemical gradient. Chloride influx into the postsynaptic neuron following GABAAR opening decreases the neuron ability to generate a new action potential, thereby reducing nerve transmission. Beta-containing GABAARs can simultaneously bind GABA and histamine where histamine binds at the interface of two neighboring beta subunits, which may be involved in the regulation of sleep and wakefulness. In Rattus norvegicus (Rat), this protein is Gamma-aminobutyric acid receptor subunit beta-1.